Reading from the N-terminus, the 500-residue chain is Proline/betaine transporter (500 aa).

At Met-1 to Glu-37 the chain is on the cytoplasmic side. A helical transmembrane segment spans residues Trp-38–Gly-58. Residues Ala-59–Met-65 are Periplasmic-facing. Residues Val-66–Phe-86 traverse the membrane as a helical segment. The Cytoplasmic segment spans residues Gly-87 to Lys-97. Residues Ile-98–Ser-118 traverse the membrane as a helical segment. The Periplasmic portion of the chain corresponds to Tyr-119–Thr-121. A helical membrane pass occupies residues Ile-122–Gly-142. The Cytoplasmic segment spans residues Gly-143–Asp-169. Residues Phe-170–Val-190 traverse the membrane as a helical segment. Residues Gly-191–Asn-194 lie on the Periplasmic side of the membrane. The helical transmembrane segment at Phe-195–Leu-215 threads the bilayer. The Cytoplasmic segment spans residues Tyr-216–Ser-260. The chain crosses the membrane as a helical span at residues Leu-261–Tyr-281. The Periplasmic portion of the chain corresponds to Met-282–Gly-297. The helical transmembrane segment at Val-298–Leu-318 threads the bilayer. Topologically, residues Ser-319 to Arg-325 are cytoplasmic. A helical transmembrane segment spans residues Pro-326–Ile-346. At Asn-347 to Val-350 the chain is on the periplasmic side. Residues Ile-351 to Val-371 form a helical membrane-spanning segment. Residues Met-372–Ala-390 are Cytoplasmic-facing. A helical membrane pass occupies residues Ala-391 to Val-411. Over Glu-412–Asn-416 the chain is Periplasmic. The helical transmembrane segment at Leu-417–Thr-437 threads the bilayer. Topologically, residues Met-438–Glu-500 are cytoplasmic. A coiled-coil region spans residues Ala-453–Ile-498.

It belongs to the major facilitator superfamily. Metabolite:H+ Symporter (MHS) family (TC 2.A.1.6) family.

The protein localises to the cell inner membrane. Functionally, proton symporter that senses osmotic shifts and responds by importing osmolytes such as proline, glycine betaine, stachydrine, pipecolic acid, ectoine and taurine. It is both an osmosensor and an osmoregulator which is available to participate early in the bacterial osmoregulatory response. This is Proline/betaine transporter (proP) from Escherichia coli O157:H7.